Reading from the N-terminus, the 96-residue chain is Putative pterin-4-alpha-carbinolamine dehydratase (96 aa).

The protein belongs to the pterin-4-alpha-carbinolamine dehydratase family.

The catalysed reaction is (4aS,6R)-4a-hydroxy-L-erythro-5,6,7,8-tetrahydrobiopterin = (6R)-L-erythro-6,7-dihydrobiopterin + H2O. This is Putative pterin-4-alpha-carbinolamine dehydratase from Prochlorococcus marinus (strain MIT 9312).